The sequence spans 447 residues: GTPase Der (447 aa).

EngA-type G domains are found at residues 3–167 and 180–353; these read PVIA…QLPE and IRLA…KAAT. Residues 9-16, 56-60, 119-122, 186-193, 233-237, and 298-301 contribute to the GTP site; these read GRPNVGKS, DTGGF, NKAE, DTAGL, and NKWD. In terms of domain architecture, KH-like spans 353 to 438; that stretch reads TCKMPTPVLT…PLRIEMKTSR (86 aa).

The protein belongs to the TRAFAC class TrmE-Era-EngA-EngB-Septin-like GTPase superfamily. EngA (Der) GTPase family. In terms of assembly, associates with the 50S ribosomal subunit.

Functionally, GTPase that plays an essential role in the late steps of ribosome biogenesis. The protein is GTPase Der of Paracidovorax citrulli (strain AAC00-1) (Acidovorax citrulli).